A 91-amino-acid polypeptide reads, in one-letter code: Small ribosomal subunit protein uS19 (91 aa).

This sequence belongs to the universal ribosomal protein uS19 family.

Its function is as follows. Protein S19 forms a complex with S13 that binds strongly to the 16S ribosomal RNA. This is Small ribosomal subunit protein uS19 from Cupriavidus necator (strain ATCC 17699 / DSM 428 / KCTC 22496 / NCIMB 10442 / H16 / Stanier 337) (Ralstonia eutropha).